The chain runs to 149 residues: Large ribosomal subunit protein bL9 (149 aa).

It belongs to the bacterial ribosomal protein bL9 family.

Its function is as follows. Binds to the 23S rRNA. This Actinobacillus pleuropneumoniae serotype 3 (strain JL03) protein is Large ribosomal subunit protein bL9.